A 327-amino-acid polypeptide reads, in one-letter code: L-lactate dehydrogenase (327 aa).

NAD(+) contacts are provided by residues Val-18, Asp-39, Lys-44, Tyr-69, and 83 to 84 (GA). Residues Gln-86, Arg-92, and 124–127 (NPVD) contribute to the substrate site. Residues 122 to 124 (AAN) and Ser-147 each bind NAD(+). 152 to 155 (DSAR) contributes to the substrate binding site. Beta-D-fructose 1,6-bisphosphate contacts are provided by Arg-157 and His-172. Residue His-179 is the Proton acceptor of the active site. A Phosphotyrosine modification is found at Tyr-224. Thr-233 lines the substrate pocket.

The protein belongs to the LDH/MDH superfamily. LDH family. In terms of assembly, homotetramer.

The protein resides in the cytoplasm. The catalysed reaction is (S)-lactate + NAD(+) = pyruvate + NADH + H(+). Its pathway is fermentation; pyruvate fermentation to lactate; (S)-lactate from pyruvate: step 1/1. Allosterically activated by fructose 1,6-bisphosphate (FBP). Its function is as follows. Catalyzes the conversion of lactate to pyruvate. This chain is L-lactate dehydrogenase, found in Streptococcus equi subsp. zooepidemicus (strain H70).